The sequence spans 337 residues: Pseudouridine-5'-phosphate glycosidase (337 aa).

The active-site Proton donor is the glutamate 26. The substrate site is built by lysine 87 and valine 107. A Mn(2+)-binding site is contributed by aspartate 139. 141–143 (SAD) is a substrate binding site. Lysine 160 (nucleophile) is an active-site residue. A compositionally biased stretch (low complexity) spans 306-325 (SSGPQAGAGAPGAEPGPARR). The segment at 306–337 (SSGPQAGAGAPGAEPGPARRTSPARAPSGEGW) is disordered.

It belongs to the pseudouridine-5'-phosphate glycosidase family. As to quaternary structure, homotrimer. Mn(2+) is required as a cofactor.

It catalyses the reaction D-ribose 5-phosphate + uracil = psi-UMP + H2O. In terms of biological role, catalyzes the reversible cleavage of pseudouridine 5'-phosphate (PsiMP) to ribose 5-phosphate and uracil. Functions biologically in the cleavage direction, as part of a pseudouridine degradation pathway. The protein is Pseudouridine-5'-phosphate glycosidase of Methylobacterium nodulans (strain LMG 21967 / CNCM I-2342 / ORS 2060).